Consider the following 331-residue polypeptide: Ketol-acid reductoisomerase (NADP(+)) (331 aa).

A KARI N-terminal Rossmann domain is found at 2 to 182 (AKVYYDEDAN…GGTKGGVLET (181 aa)). NADP(+) contacts are provided by residues 25-28 (YGSQ), S51, S53, and 83-86 (DEKQ). H108 is a catalytic residue. G134 provides a ligand contact to NADP(+). A KARI C-terminal knotted domain is found at 183–328 (TFKDETETDL…VELRAMMPWL (146 aa)). Residues D191, E195, E227, and E231 each coordinate Mg(2+). S252 lines the substrate pocket.

Belongs to the ketol-acid reductoisomerase family. It depends on Mg(2+) as a cofactor.

The enzyme catalyses (2R)-2,3-dihydroxy-3-methylbutanoate + NADP(+) = (2S)-2-acetolactate + NADPH + H(+). The catalysed reaction is (2R,3R)-2,3-dihydroxy-3-methylpentanoate + NADP(+) = (S)-2-ethyl-2-hydroxy-3-oxobutanoate + NADPH + H(+). It participates in amino-acid biosynthesis; L-isoleucine biosynthesis; L-isoleucine from 2-oxobutanoate: step 2/4. The protein operates within amino-acid biosynthesis; L-valine biosynthesis; L-valine from pyruvate: step 2/4. In terms of biological role, involved in the biosynthesis of branched-chain amino acids (BCAA). Catalyzes an alkyl-migration followed by a ketol-acid reduction of (S)-2-acetolactate (S2AL) to yield (R)-2,3-dihydroxy-isovalerate. In the isomerase reaction, S2AL is rearranged via a Mg-dependent methyl migration to produce 3-hydroxy-3-methyl-2-ketobutyrate (HMKB). In the reductase reaction, this 2-ketoacid undergoes a metal-dependent reduction by NADPH to yield (R)-2,3-dihydroxy-isovalerate. In Clostridium novyi (strain NT), this protein is Ketol-acid reductoisomerase (NADP(+)).